Consider the following 137-residue polypeptide: Large ribosomal subunit protein uL16 (137 aa).

Belongs to the universal ribosomal protein uL16 family. Part of the 50S ribosomal subunit.

Functionally, binds 23S rRNA and is also seen to make contacts with the A and possibly P site tRNAs. This chain is Large ribosomal subunit protein uL16, found in Alkalilimnicola ehrlichii (strain ATCC BAA-1101 / DSM 17681 / MLHE-1).